Here is a 413-residue protein sequence, read N- to C-terminus: Protein cycle (413 aa).

Residues 1–43 (MEVQEFCENMEEIEDENYDEEKSARTSDENRKQNHSEIEKRRR) form a disordered region. The segment covering 8–19 (ENMEEIEDENYD) has biased composition (acidic residues). Residues 20-41 (EEKSARTSDENRKQNHSEIEKR) are compositionally biased toward basic and acidic residues. The bHLH domain maps to 30-83 (NRKQNHSEIEKRRRDKMNTYINELSSMIPMCFAMQRKLDKLTVLRMAVQHLRGI). Residues 104–175 (DQELKMIILQ…EQLSSLEQCP (72 aa)) form the PAS 1 domain. Residues 219–242 (NQIKEESDTSSSSRSSTKRKSRLT) form a disordered region. The PAS 2 domain maps to 297 to 367 (PASLDNHPNI…ESHKMVMQVP (71 aa)). The region spanning 372–413 (TQVYRFRCKDNSYIQLQSEWRAFKNPWTSEIDYIIAKNSVFL) is the PAC domain.

As to quaternary structure, efficient DNA binding requires dimerization with another bHLH protein. Forms a heterodimer with Clock in order to activate PER and TIM transcription. Expressed in head and ovary.

Its subcellular location is the nucleus. Putative transcription factor involved in the generation of biological rhythms. Activates cycling transcription of Period (PER) and Timeless (TIM) by binding to the E-box (5'-CACGTG-3') present in their promoters. The polypeptide is Protein cycle (cyc) (Drosophila melanogaster (Fruit fly)).